The following is a 421-amino-acid chain: Probable N-acetylgalactosaminyltransferase 8 (421 aa).

Topologically, residues 1–3 are cytoplasmic; the sequence is MRR. A helical; Signal-anchor for type II membrane protein transmembrane segment spans residues 4-24; the sequence is HVVLSIFVFAGIVFAAEEAEK. The Lumenal segment spans residues 25–421; the sequence is LPKCEHVDPY…ELEPKVHDEL (397 aa). 2 N-linked (GlcNAc...) asparagine glycosylation sites follow: Asn52 and Asn58. 2 cysteine pairs are disulfide-bonded: Cys98/Cys331 and Cys322/Cys399. The tract at residues 106-219 is catalytic subdomain A; it reads SYSTSVVVIH…ERWLEPLLQP (114 aa). Asp147 and Arg180 together coordinate substrate. Asp203 is a binding site for Mn(2+). Ser204 is a binding site for substrate. Residue His205 participates in Mn(2+) binding. Residues 277 to 339 are catalytic subdomain B; it reads PFNSPAMPGG…PCSRVGHVFR (63 aa). Trp308 lines the substrate pocket. His336 is a Mn(2+) binding site. 2 residues coordinate substrate: Arg339 and Tyr344. The short motif at 418 to 421 is the Prevents secretion from ER element; the sequence is HDEL.

The protein belongs to the glycosyltransferase 2 family. GalNAc-T subfamily. The cofactor is Mn(2+).

Its subcellular location is the golgi apparatus membrane. The protein operates within protein modification; protein glycosylation. Its function is as follows. Potential glycopeptide transferase involved in O-linked oligosaccharide biosynthesis. In contrast to other members of the family, it does not act as a peptide transferase that transfers GalNAc onto serine or threonine residue on peptides that have been tested. Some peptide transferase activity is however not excluded, considering that its appropriate peptide substrate may remain unidentified. The protein is Probable N-acetylgalactosaminyltransferase 8 (gly-8) of Caenorhabditis elegans.